We begin with the raw amino-acid sequence, 1011 residues long: Beta-galactosidase A (1011 aa).

Positions 1-19 are cleaved as a signal peptide; sequence MKLLSSWVVAALAAQAAGA. Substrate contacts are provided by residues Y96, 140–142, and N199; that span reads NAE. E200 acts as the Proton donor in catalysis. Intrachain disulfides connect C205/C206 and C267/C316. E299 (nucleophile) is an active-site residue. Position 365 (Y365) interacts with substrate. N-linked (GlcNAc...) asparagine glycans are attached at residues N374, N456, N625, N707, N763, N780, and N917.

Belongs to the glycosyl hydrolase 35 family. In terms of assembly, monomer.

The protein localises to the secreted. The catalysed reaction is Hydrolysis of terminal non-reducing beta-D-galactose residues in beta-D-galactosides.. Cleaves beta-linked terminal galactosyl residues from gangliosides, glycoproteins, and glycosaminoglycans. Has high in vitro transglycosylation activity with p-nitrophenyl-beta-D-galactopyranoside, methyl-beta-D-galactopyranoside or lactose as a donor and galactose as an acceptor. The polypeptide is Beta-galactosidase A (lacA) (Penicillium sp).